A 511-amino-acid polypeptide reads, in one-letter code: Probable lipid II flippase MurJ (511 aa).

11 helical membrane-spanning segments follow: residues 25–45, 85–105, 133–153, 156–178, 245–265, 271–291, 315–335, 356–376, 400–420, 442–462, and 481–501; these read DILI…FISF, SSIL…GGFF, IMFP…ILNS, YFSI…SVFF, ISLI…ISWI, LIEF…FTSL, LIVS…VIIV, LYSC…AFYA, FLIF…TSWV, FIFI…LFVV, and LFFG…ILGI.

It belongs to the MurJ/MviN family.

Its subcellular location is the cell inner membrane. The protein operates within cell wall biogenesis; peptidoglycan biosynthesis. Its function is as follows. Involved in peptidoglycan biosynthesis. Transports lipid-linked peptidoglycan precursors from the inner to the outer leaflet of the cytoplasmic membrane. The chain is Probable lipid II flippase MurJ from Buchnera aphidicola subsp. Acyrthosiphon pisum (strain APS) (Acyrthosiphon pisum symbiotic bacterium).